A 220-amino-acid polypeptide reads, in one-letter code: Putative cobalt transport protein CbiM (220 aa).

6 consecutive transmembrane segments (helical) span residues 6-26 (GFLP…VISY), 45-65 (IAVA…SVTG), 74-94 (GIAV…IVLL), 107-127 (TLGA…WVVF), 153-173 (LVTS…AGVV), and 188-208 (IPIG…IAMS).

The protein belongs to the CbiM family. Forms an energy-coupling factor (ECF) transporter complex composed of an ATP-binding protein (A component, CbiO), a transmembrane protein (T component, CbiQ) and 2 possible substrate-capture proteins (S components, CbiM and CbiN) of unknown stoichimetry.

The protein resides in the cell membrane. Its pathway is cofactor biosynthesis; adenosylcobalamin biosynthesis. Functionally, part of the energy-coupling factor (ECF) transporter complex CbiMNOQ involved in cobalt import. The polypeptide is Putative cobalt transport protein CbiM (Halobacterium salinarum (strain ATCC 29341 / DSM 671 / R1)).